A 154-amino-acid chain; its full sequence is MAARMCCQLDPARDVLCLRPVGAESRGRPVSGPFGPLPSPSSSAVPADHGAHLSLRGLPVCAFSSAGPCALRFTSARRMETTVNAHQVLPKVLYKRTLGLSAMSTTDLEAYFKDCLFKDWEELGEEIRLMIFVLGGCRHKLVCSPAPCNFFTSA.

Residues 68–117 (PCALRFTSARRMETTVNAHQVLPKVLYKRTLGLSAMSTTDLEAYFKDCLF) are mitochondrial targeting sequence.

This sequence belongs to the orthohepadnavirus protein X family. In terms of assembly, may form homodimer. May interact with host CEBPA, CFLAR, CREB1, DDB1, E4F1, HBXIP, HSPD1/HSP60, NFKBIA, POLR2E and SMAD4. Interacts with host SMC5-SMC6 complex and induces its degradation. Interacts with host TRPC4AP; leading to prevent ubiquitination of TRPC4AP. Interacts with host PLSCR1; this interaction promotes ubiquitination and degradation of HBx and impairs HBx-mediated cell proliferation. A fraction may be phosphorylated in insect cells and HepG2 cells, a human hepatoblastoma cell line. Phosphorylated in vitro by host protein kinase C or mitogen-activated protein kinase. N-acetylated in insect cells.

The protein localises to the host cytoplasm. The protein resides in the host nucleus. Its subcellular location is the host mitochondrion. Multifunctional protein that plays a role in silencing host antiviral defenses and promoting viral transcription. Does not seem to be essential for HBV infection. May be directly involved in development of cirrhosis and liver cancer (hepatocellular carcinoma). Most of cytosolic activities involve modulation of cytosolic calcium. The effect on apoptosis is controversial depending on the cell types in which the studies have been conducted. May induce apoptosis by localizing in mitochondria and causing loss of mitochondrial membrane potential. May also modulate apoptosis by binding host CFLAR, a key regulator of the death-inducing signaling complex (DISC). Promotes viral transcription by using the host E3 ubiquitin ligase DDB1 to target the SMC5-SMC6 complex to proteasomal degradation. This host complex would otherwise bind to viral episomal DNA, and prevents its transcription. Moderately stimulates transcription of many different viral and cellular transcription elements. Promoters and enhancers stimulated by HBx contain DNA binding sites for NF-kappa-B, AP-1, AP-2, c-EBP, ATF/CREB, or the calcium-activated factor NF-AT. The sequence is that of Protein X from Homo sapiens (Human).